We begin with the raw amino-acid sequence, 2249 residues long: Endoribonuclease Dcr-1 (2249 aa).

The interval 1 to 371 (MAFHWCDNNL…SPKVRRLLQT (371 aa)) is essential for miRNA substrate recognition. Residues 1-690 (MAFHWCDNNL…SKQPPTACDI (690 aa)) are important for interaction with loqs isoform PB (loqs-PB). The helicase domain stretch occupies residues 1–761 (MAFHWCDNNL…AEIDTAHSLA (761 aa)). The necessary for processing certain pre-miRNas, such as pre-let 7 and pre-bantam stretch occupies residues 1 to 1042 (MAFHWCDNNL…VSLELAKERV (1042 aa)). 37-44 (LGHRSSKE) is a binding site for ATP. Residues 371 to 491 (TLRCFKPEEV…HHRDHNDGSD (121 aa)) are dispensable for activity and substrate recognition. A disordered region spans residues 436 to 486 (TTEDRQTNRSAARVTPTPTPAHAKPKPSSGANTAQPRTRRRVYTRRHHRDH). A compositionally biased stretch (basic residues) spans 472–484 (RTRRRVYTRRHHR). Positions 485 to 648 (DHNDGSDTLC…TGDTTEADSD (164 aa)) constitute a Helicase C-terminal domain. Positions 496–606 (LIYCNQNHTA…VQCKGRARAA (111 aa)) are essential for miRNA substrate recognition. The dispensable for activity and substrate recognition stretch occupies residues 617–761 (SYKSPTVGSV…AEIDTAHSLA (145 aa)). Disordered stretches follow at residues 640–665 (GDTT…PYTF) and 705–757 (LDTS…IDTA). Residues 716–726 (SMSNTSPSESS) show a composition bias toward low complexity. One can recognise a Dicer dsRNA-binding fold domain in the interval 825–920 (AIALVNKYCA…QPIGKEGFRA (96 aa)). The segment at 924–957 (DWECFELEPEDEQIVQLSDEPRPGTTKRRQYYYK) is wing domain. Positions 963–1108 (FCDCRPVAGA…WQFLELIQAN (146 aa)) are platform domain. The PAZ domain occupies 1100–1246 (QFLELIQANG…LVPELCTVHP (147 aa)). The interval 1147-2249 (QYFYVAEICP…KKQGLIAKKD (1103 aa)) is essential for production of mature miRNAs from pre-miRNAs. Also important for proper formation of the siRISC complex but is dispensable for biogenesis of siRNAs. The segment at 1314–1351 (ESKQKESLKDDTINGKDLADVEKKPTSEETQLDKDSKD) is disordered. Ser-1423 is subject to Phosphoserine. Positions 1426-1477 (FWDVSNGESGFKGPKSSQNKQGGKGKAKGPAKPTFNYYDSDNSLGSSYDDDD) are disordered. The segment covering 1437-1446 (KGPKSSQNKQ) has biased composition (low complexity). The segment covering 1462–1471 (YYDSDNSLGS) has biased composition (polar residues). RNase III domains follow at residues 1698–1919 (ITSA…IECG) and 1993–2150 (FEEF…LDSN). Residues Glu-1745 and Asp-1749 each coordinate Mg(2+). Phosphoserine is present on residues Ser-1877 and Ser-1880. Asp-1905, Glu-1908, Glu-2032, Asp-2136, and Glu-2139 together coordinate Mg(2+). Residues 2175–2241 (VPKSPIRELL…AKCALRQLKK (67 aa)) form the DRBM domain.

The protein belongs to the helicase family. Dicer subfamily. As to quaternary structure, component of the miRNA-directed RISC loading complex (miRLC), composed of at least Dcr-1, AGO1 and loqs, which processes pre-miRNAs and loads the resulting miRNAs into the Argonaute 1 (AGO1)-containing RNA-induced silencing complex (miRISC). Interacts (via helicase domain) with dicing cofactor loqs isoform-PB (loqs-PB) (via DRBM 3 domain); this interaction enhances processing of pre-miRNAs by increasing substrate binding affinity of the dicer. Also able to interact with loqs isoforms PA and PC, however the relevance of such interactions are unclear in vivo. Different regions of the Dcr-1-loqs-PB heterodimer collaborate to recognize, bind and position the pre-miRNA for Dcr-1 mediated cleavage. In the absence of authentic miRNA substrates, the heterodimer favors a closed, catalytically incompetent, conformation, whereas binding of authentic pre-miRNA substrates stabilizes the relatively rare open, catalytically competent, conformation of the heterodimer. During substrate recognition, the Dcr-1 PAZ domain and pre-miRNA interact with the DRBM 1 domain of loqs-PB, which likely contributes to substrate recognition and stabilization. At the miRNA binding stage, the Dcr-1 DRBM domain and loqs-PB DRBM domains then bind the pre-miRNA in tandem to form a tight 'belt' around the pre-miRNA stem, the pre-miRNA loop is docked in the loop-binding region formed by DUF283, DRBM and part of the N terminus of Dcr-1, and the loqs-PB DRBM 1 and the wing domain of Dcr-1 act together to bind the 5' and 3' pre-miRNA termini within the PAZ and platform domains of Dcr-1. These interactions between the proteins and their pre-miRNA substrate stabilize a distorted form of the pre-miRNA and position the scissile phosphodiester bonds of the pre-miRNA at the RNase III catalytic cleavage sites of Dcr-1. Following Dcr-1 mediated cleavage, the miRNA duplex remains bound to loqs-PB DRBM 1, which dissociates from the Dcr-1 RNase III 1 domain but remains in contact with the PAZ and wing domains, suggesting that the heterodimer presents the mature miRNA to Ago2 for loading into the RNA-induced silencing complex (miRISC). Interacts with AGO2 and Fmr1 to form a RNA-induced silencing complex (siRISC), a ribonucleoprotein (RNP) complex involved in translation regulation; other components of the complex are RpL5, RpL11, AGO2 and Rm62. Interacts with piwi and vas; these interactions occur in the polar granules. Requires Mg(2+) as cofactor. Mn(2+) serves as cofactor.

It is found in the cytoplasm. The protein localises to the cytosol. It catalyses the reaction Endonucleolytic cleavage to 5'-phosphomonoester.. With respect to regulation, activity towards pre-miRNAs is not inhibited by inorganic phosphate. Its function is as follows. Endoribonuclease which functions in microRNA- (miRNA) gene silencing and, independently of its ribonuclease III activity, also acts in the short interfering RNA- (siRNA) gene silencing pathway. Cleaves hairpin precursor miRNAs (pre-miRNA) to generate mature miRNAs (miRNAs) that are between twenty-one to twenty-four nucleotides in length and function in RNA silencing and post-transcriptional regulation of gene expression. Also functions in miRNA loading and assembly of the Argonaute 1 (AGO1)-containing RNA-induced silencing complex (miRISC), with the miRNAs serving as a guide to direct the miRISC to complementary RNAs to degrade them or prevent their translation. Independently of its catalytic activity, functions in the siRNA silencing pathway by promoting assembly of the siRNA-directed Argonaute 2 (AGO2)-containing RISC (siRISC). Required for the proper formation of a stable intermediate (R2) in siRISC assembly, which is formed from the R1 precursor complex (containing Dcr-2, R2D2 and the siRNA) and is used for assembly of the mature (R3) siRISC complex. It is not required for siRNA biogenesis. During embryogenesis, involved in germline fate determination. Post-transcriptionally regulates mei-P26 expression through the microRNA pathway, which in turn post-translationally regulates myc protein levels; involved in regulating cell and tissue growth. The polypeptide is Endoribonuclease Dcr-1 (Drosophila melanogaster (Fruit fly)).